Reading from the N-terminus, the 372-residue chain is Protein phosphatase Mn(2+)-dependent 1K (372 aa).

The N-terminal 29 residues, 1-29 (MSTAALLTLVRSGGNQVRRRVLLRARGLQ), are a transit peptide targeting the mitochondrion. Residues 46–61 (KWSRFDPDGSGRPATW) are critical for association with the BCKDH complex. The PPM-type phosphatase domain occupies 94–346 (NVGSASQIGK…DNTTAVVVPF (253 aa)). Residues aspartate 127 and glycine 128 each coordinate Mn(2+). Position 248 is a phosphoserine (serine 248). Aspartate 298 and aspartate 337 together coordinate Mn(2+).

It belongs to the PP2C family. Monomer. Interacts with E1 and E2 components of the branched-chain alpha-ketoacid dehydrogenase (BCKDH) complex; this interaction requires colocalization in mitochondria. Interacts with BCKDHA but not with BCKDHB of the E1 component. Interacts with the 24-meric E2 core composed of DBT monomers with a 24:1 stoichiometry; the N-terminal region (residues 49-61) of PPM1K and C-terminal linker of the lipoyl domain of DBT (residues 145-160) are critical for this interaction, whereas the lipoyl prosthetic group is dispensable. Competes with BCKDK for binding to the E2 core; this interaction is modulated by branched-chain alpha-keto acids. At steady state, BCKDH holoenzyme preferentially binds BCKDK and BCKDHA is phosphorylated. In response to high levels of branched-chain alpha-keto acids, the inhibitory BCKDK is replaced by activating PPM1K leading to BCKDHA dephosphorylation and BCAA degradation. The cofactor is Mn(2+).

It is found in the mitochondrion matrix. The enzyme catalyses O-phospho-L-seryl-[3-methyl-2-oxobutanoate dehydrogenase] + H2O = L-seryl-[3-methyl-2-oxobutanoate dehydrogenase] + phosphate. The catalysed reaction is O-phospho-L-seryl-[protein] + H2O = L-seryl-[protein] + phosphate. It participates in protein modification. Functionally, serine/threonine-protein phosphatase component of macronutrients metabolism. Forms a functional kinase and phosphatase pair with BCKDK, serving as a metabolic regulatory node that coordinates branched-chain amino acids (BCAAs) with glucose and lipid metabolism via two distinct phosphoprotein targets: mitochondrial BCKDHA subunit of the branched-chain alpha-ketoacid dehydrogenase (BCKDH) complex and cytosolic ACLY, a lipogenic enzyme of Krebs cycle. At high levels of branched-chain ketoacids, dephosphorylates and activates mitochondrial BCKDH complex, a multisubunit complex consisting of three multimeric components each involved in different steps of BCAA catabolism: E1 composed of BCKDHA and BCKDHB, E2 core composed of DBT monomers, and E3 composed of DLD monomers. Tightly associates with the E2 component of BCKDH complex and dephosphorylates BCKDHA on Ser-347. Regulates the reversible phosphorylation of ACLY in response to changes in cellular carbohydrate abundance such as occurs during fasting to feeding metabolic transition. At fasting state, appears to dephosphorylate ACLY on Ser-455 and inactivate it. Refeeding stimulates MLXIPL/ChREBP transcription factor, leading to increased BCKDK to PPM1K expression ratio, phosphorylation and activation of ACLY that ultimately results in the generation of malonyl-CoA and oxaloacetate immediate substrates of de novo lipogenesis and gluconeogenesis, respectively. Recognizes phosphosites having SxS or RxxS motifs and strictly depends on Mn(2+) ions for the phosphatase activity. Regulates Ca(2+)-induced opening of mitochondrial transition pore and apoptotic cell death. This chain is Protein phosphatase Mn(2+)-dependent 1K (PPM1K), found in Bos taurus (Bovine).